The following is an 80-amino-acid chain: Acyl carrier protein (80 aa).

A Carrier domain is found at 2–77 (KNIEERIKKI…KSIDFIQNKN (76 aa)). An O-(pantetheine 4'-phosphoryl)serine modification is found at serine 37.

The protein belongs to the acyl carrier protein (ACP) family. 4'-phosphopantetheine is transferred from CoA to a specific serine of apo-ACP by AcpS. This modification is essential for activity because fatty acids are bound in thioester linkage to the sulfhydryl of the prosthetic group.

The protein localises to the cytoplasm. It participates in lipid metabolism; fatty acid biosynthesis. Its function is as follows. Carrier of the growing fatty acid chain in fatty acid biosynthesis. The sequence is that of Acyl carrier protein from Buchnera aphidicola subsp. Acyrthosiphon pisum (strain 5A).